The sequence spans 504 residues: MFLFSSRRITSLRSYTIIKHSSCYSTLVSDGNIFSIQHFQSLMQKYESNLKIIHQLHSHFTTSGFLLLHQKQNSGKLFLFNPLLRCYSLGETPLHAYFLYDQLQRLHFLSDHNKSLPPFDSFTYLFLLKASSNPRFPSLLLGIGLHGLTLKLGFESHVYVQTALVGMYLVGGNMIDAHKVFDEMPERNPVTWNVMITGLTNLGDFEKALCFLEKMPNRTVVSWTTIIDGYARVDKPKEAILLFSRMVACDAIKPNEITILAILPAVWNLGDLKMCGSVHAYVGKRGFVPCDIRVTNSLIDAYAKCGCIQSAFKFFIEIPNGRKNLVSWTTMISAFAIHGMGKEAVSMFKDMERLGLKPNRVTMISVLNACSHGGLAEEEFLEFFNTMVNEYKITPDVKHYGCLVDMLRRKGRLEEAEKIALEIPIEEKAVVWRMLLGACSVYDDAELAERVTRKLMELERSHGGDYVLMSNIFCGTGRFLDAQRFRKQMDVRGVAKLPGHSQVT.

The N-terminal 87 residues, 1–87 (MFLFSSRRIT…FLFNPLLRCY (87 aa)), are a transit peptide targeting the mitochondrion. 10 PPR repeats span residues 76 to 110 (KLFL…HFLS), 120 to 156 (DSFT…GFES), 157 to 187 (HVYV…MPER), 188 to 222 (NPVT…TVVS), 223 to 253 (WTTI…DAIK), 255 to 289 (NEIT…GFVP), 291 to 321 (DIRV…IPNG), 324 to 358 (NLVS…GLKP), 359 to 390 (NRVT…MVNE), and 396 to 430 (DVKH…EKAV). Residues 431–504 (VWRMLLGACS…AKLPGHSQVT (74 aa)) are type E motif; degenerate.

Belongs to the PPR family. PCMP-E subfamily.

The protein resides in the mitochondrion. This chain is Pentatricopeptide repeat-containing protein At1g09220, mitochondrial (PCMP-E25), found in Arabidopsis thaliana (Mouse-ear cress).